The primary structure comprises 932 residues: Progesterone receptor (932 aa).

Positions 1–164 are AF3; mediates transcriptional activation; the sequence is MTELKAKGPR…PATQGVLSPL (164 aa). The disordered stretch occupies residues 1–254; the sequence is MTELKAKGPR…GGAAAGGAAA (254 aa). Positions 1–565 are modulating, Pro-Rich; sequence MTELKAKGPR…YSFESLPQKI (565 aa). Serine 20 carries the post-translational modification Phosphoserine. The LXXL motif 1 signature appears at 55–59; that stretch reads LDGLL. A Phosphoserine modification is found at serine 81. Positions 88–103 are enriched in low complexity; sequence SRAEATRGAGGSSSSP. The short motif at 115–119 is the LXXL motif 2 element; that stretch reads LDTLL. Residues serine 130 and serine 162 each carry the phosphoserine modification. The interval 165–304 is mediates transcriptional transrepression; that stretch reads MSRSGGKAGD…LATTVMDFIH (140 aa). A Nuclear localization signal motif is present at residues 183–187; the sequence is KVLPQ. A phosphoserine mark is found at serine 190 and serine 213. The segment covering 220 to 231 has biased composition (acidic residues); that stretch reads EVEEEDGSESED. A compositionally biased stretch (low complexity) spans 232-254; that stretch reads SAGPLLKGKPRALGGAAAGGAAA. Phosphoserine; by MAPK1 is present on serine 293. The span at 334–349 shows a compositional bias: low complexity; that stretch reads AASAFAPPRSSPSASS. The disordered stretch occupies residues 334–356; that stretch reads AASAFAPPRSSPSASSTPVAVGD. Phosphoserine; by MAPK is present on serine 344. A Glycyl lysine isopeptide (Lys-Gly) (interchain with G-Cter in SUMO); alternate cross-link involves residue lysine 387. Residue lysine 387 forms a Glycyl lysine isopeptide (Lys-Gly) (interchain with G-Cter in ubiquitin); alternate linkage. Disordered regions lie at residues 414–451 and 468–499; these read PDFP…SSAS and PPQQ…STAA. Residues 417-432 show a composition bias toward pro residues; it reads PLGPPPPLPPRAPPSR. Over residues 433-451 the composition is skewed to low complexity; sequence PGEAAVTAAPASASVSSAS. Residues 455–545 are AF1; mediates transcriptional activation; sequence STLECILYKA…VYPPYLNYLR (91 aa). The span at 470-480 shows a compositional bias: pro residues; the sequence is QQGPFAPPPSK. Lysine 530 participates in a covalent cross-link: Glycyl lysine isopeptide (Lys-Gly) (interchain with G-Cter in SUMO). NR C4-type zinc fingers lie at residues 566-586 and 602-626; these read CLIC…CGSC and CAGR…LRKC. A DNA-binding region (nuclear receptor) is located at residues 566-638; the sequence is CLICGDEASG…AGMVLGGRKF (73 aa). Serine 675 carries the post-translational modification Phosphoserine. The 235-residue stretch at 678-912 folds into the NR LBD domain; that stretch reads QDIQLIPPLI…EFPEMMSEVI (235 aa). An AF2; mediates transcriptional activation region spans residues 686–932; that stretch reads LINLLMSIEP…MVKPLLFHKK (247 aa). Arginine 765 serves as a coordination point for progesterone.

It belongs to the nuclear hormone receptor family. As to quaternary structure, interacts with SMARD1 and UNC45A. Interacts with CUEDC2; the interaction promotes ubiquitination, decreases sumoylation, and represses transcriptional activity. Interacts with PIAS3; the interaction promotes sumoylation of PR in a hormone-dependent manner, inhibits DNA-binding, and alters nuclear export. Interacts with SP1; the interaction requires ligand-induced phosphorylation on Ser-344 by ERK1/2-MAPK. Interacts with PRMT2. Interacts with NCOA2 and NCOA1. Interacts with KLF9. Interacts with GTF2B. Post-translationally, phosphorylated on multiple serine sites. Several of these sites are hormone-dependent. Phosphorylation on Ser-293 is highly hormone-dependent and modulates ubiquitination and sumoylation on Lys-387. Phosphorylation on Ser-102 and Ser-344 also requires induction by hormone. Basal phosphorylation on Ser-81, Ser-162 and Ser-190 is increased in response to progesterone and can be phosphorylated in vitro by the CDK2-A1 complex. Phosphorylation at Ser-162 and Ser-293, but not at Ser-190, is impaired during the G(2)/M phase of the cell cycle. Phosphorylation on Ser-344 by ERK1/2 MAPK is required for interaction with SP1. Sumoylation is hormone-dependent and represses transcriptional activity. Sumoylation on all three sites is enhanced by PIAS3. Desumoylated by SENP1. Sumoylation on Lys-387, the main site of sumoylation, is repressed by ubiquitination on the same site, and modulated by phosphorylation at Ser-293. In terms of processing, ubiquitination is hormone-dependent and represses sumoylation on the same site. Promoted by MAPK-mediated phosphorylation on Ser-293. Ubiquitinated by UBR5, leading to its degradation: UBR5 specifically recognizes and binds ligand-bound PGR when it is not associated with coactivators (NCOAs). In presence of NCOAs, the UBR5-degron is not accessible, preventing its ubiquitination and degradation. Post-translationally, palmitoylated by ZDHHC7 and ZDHHC21. Palmitoylation is required for plasma membrane targeting and for rapid intracellular signaling via ERK and AKT kinases and cAMP generation.

Its subcellular location is the nucleus. The protein resides in the cytoplasm. Functionally, the steroid hormones and their receptors are involved in the regulation of eukaryotic gene expression and affect cellular proliferation and differentiation in target tissues. Transcriptional activator of several progesteron-dependent promoters in a variety of cell types. Involved in activation of SRC-dependent MAPK signaling on hormone stimulation. The sequence is that of Progesterone receptor (PGR) from Hylobates lar (Lar gibbon).